The chain runs to 425 residues: Serine--tRNA ligase (425 aa).

L-serine is bound at residue 230-232 (TAE). Position 261–263 (261–263 (RSE)) interacts with ATP. Position 284 (E284) interacts with L-serine. 348–351 (EISS) lines the ATP pocket. L-serine is bound at residue S384.

Belongs to the class-II aminoacyl-tRNA synthetase family. Type-1 seryl-tRNA synthetase subfamily. As to quaternary structure, homodimer. The tRNA molecule binds across the dimer.

The protein localises to the cytoplasm. It carries out the reaction tRNA(Ser) + L-serine + ATP = L-seryl-tRNA(Ser) + AMP + diphosphate + H(+). The enzyme catalyses tRNA(Sec) + L-serine + ATP = L-seryl-tRNA(Sec) + AMP + diphosphate + H(+). It participates in aminoacyl-tRNA biosynthesis; selenocysteinyl-tRNA(Sec) biosynthesis; L-seryl-tRNA(Sec) from L-serine and tRNA(Sec): step 1/1. Catalyzes the attachment of serine to tRNA(Ser). Is also able to aminoacylate tRNA(Sec) with serine, to form the misacylated tRNA L-seryl-tRNA(Sec), which will be further converted into selenocysteinyl-tRNA(Sec). This chain is Serine--tRNA ligase, found in Streptococcus sanguinis (strain SK36).